A 624-amino-acid chain; its full sequence is Chaperone protein HtpG (624 aa).

Positions 1 to 336 are a; substrate-binding; sequence MKGQETRGFQ…SSDLPLNVSR (336 aa). A b region spans residues 337-552; it reads EILQDSTVTR…ADEMSTQMAK (216 aa). The c stretch occupies residues 553-624; that stretch reads LFAAAGQKVP…IRRMNQLLVS (72 aa).

The protein belongs to the heat shock protein 90 family. Homodimer.

It is found in the cytoplasm. Molecular chaperone. Has ATPase activity. The polypeptide is Chaperone protein HtpG (Escherichia coli O1:K1 / APEC).